A 390-amino-acid polypeptide reads, in one-letter code: GTPase Obg (390 aa).

Residues 1–159 form the Obg domain; sequence MKFIDESLIR…RDLLLELMLL (159 aa). The 174-residue stretch at 160–333 folds into the OBG-type G domain; the sequence is ADVGMLGLPN…LCRDIMDFII (174 aa). GTP contacts are provided by residues 166 to 173, 191 to 195, 213 to 216, 283 to 286, and 314 to 316; these read GLPNAGKS, FTTLV, DIPG, NKID, and SAA. Mg(2+) contacts are provided by serine 173 and threonine 193. The segment at 363 to 382 is disordered; it reads EHQFDDDEDWDDDWSEEDDE. Residues 366 to 382 are compositionally biased toward acidic residues; sequence FDDDEDWDDDWSEEDDE.

It belongs to the TRAFAC class OBG-HflX-like GTPase superfamily. OBG GTPase family. As to quaternary structure, monomer. The cofactor is Mg(2+).

Its subcellular location is the cytoplasm. Functionally, an essential GTPase which binds GTP, GDP and possibly (p)ppGpp with moderate affinity, with high nucleotide exchange rates and a fairly low GTP hydrolysis rate. Plays a role in control of the cell cycle, stress response, ribosome biogenesis and in those bacteria that undergo differentiation, in morphogenesis control. This chain is GTPase Obg, found in Haemophilus influenzae (strain ATCC 51907 / DSM 11121 / KW20 / Rd).